A 273-amino-acid chain; its full sequence is MTDLPPLRDVVNRHGLYATKALGQNFLFDEQLLDRIARVPGKLKGENVLEVGPGPGGLTRALLRAGAKVTAIEMDKRCLPALAELADAFPGQLTVIEGDATKIAPETLFDGPWHVAANLPYNVGTQLFTGWLSGQDWPPQWKSLTLMFQLEVAERIVAQPGTDAYGRLAVLAQWRATPRIATRVHRSAFTPPPKVMSAIIHVEPAAMPEGVSARMLERVTEAAFGQRRKMLRQSLKGLPGALDALETLGIDPQRRAETLSVEDFVAIARLLTK.

Residues N25, L27, G52, E73, D99, and N118 each contribute to the S-adenosyl-L-methionine site.

This sequence belongs to the class I-like SAM-binding methyltransferase superfamily. rRNA adenine N(6)-methyltransferase family. RsmA subfamily.

Its subcellular location is the cytoplasm. It carries out the reaction adenosine(1518)/adenosine(1519) in 16S rRNA + 4 S-adenosyl-L-methionine = N(6)-dimethyladenosine(1518)/N(6)-dimethyladenosine(1519) in 16S rRNA + 4 S-adenosyl-L-homocysteine + 4 H(+). In terms of biological role, specifically dimethylates two adjacent adenosines (A1518 and A1519) in the loop of a conserved hairpin near the 3'-end of 16S rRNA in the 30S particle. May play a critical role in biogenesis of 30S subunits. In Novosphingobium aromaticivorans (strain ATCC 700278 / DSM 12444 / CCUG 56034 / CIP 105152 / NBRC 16084 / F199), this protein is Ribosomal RNA small subunit methyltransferase A.